Here is a 498-residue protein sequence, read N- to C-terminus: Protein spinster homolog 3 (498 aa).

The next 12 membrane-spanning stretches (helical) occupy residues I49–V71, G87–L107, K114–V134, L148–F168, L175–G195, W207–I227, F260–W280, Y309–I329, L343–A363, F373–L393, L407–I427, and L451–I471.

This sequence belongs to the major facilitator superfamily. Spinster (TC 2.A.1.49) family.

The protein localises to the membrane. Functionally, sphingolipid transporter. The sequence is that of Protein spinster homolog 3 (spns3) from Danio rerio (Zebrafish).